Consider the following 655-residue polypeptide: Alpha-L-iduronidase (655 aa).

The first 25 residues, 1–25 (MRPPGPRAPGLALLAALLAAPRALA), serve as a signal peptide directing secretion. Residues Pro-53, Leu-55, and His-57 each coordinate alpha-D-mannopyranose. Residue His-90 participates in alpha-L-iduronate binding. Residue Asn-109 is glycosylated (N-linked (GlcNAc...) asparagine). Alpha-L-iduronate is bound by residues Asn-180 and Glu-181. Glu-181 serves as the catalytic Proton donor. N-linked (GlcNAc...) asparagine glycosylation is found at Asn-189 and Asn-242. Alpha-L-iduronate contacts are provided by Lys-263, Glu-298, and Gly-304. Glu-298 (nucleophile) is an active-site residue. Trp-305 lines the alpha-D-mannopyranose pocket. Asn-335 carries an N-linked (GlcNAc...) asparagine glycan. Residues Asp-348 and Arg-362 each coordinate alpha-L-iduronate. Residues Asn-371 and Asn-414 are each glycosylated (N-linked (GlcNAc...) asparagine). Cys-540 and Cys-576 are disulfide-bonded.

This sequence belongs to the glycosyl hydrolase 39 family. As to quaternary structure, monomer. In terms of processing, a smaller 63 kDa protein probably arises from IDUA protein by proteolytic cleavage. Post-translationally, N-glycosylation contributes to substrate binding and is required for full enzymatic activity. Detected in testis (at protein level). Expressed ubiquitously.

The protein resides in the lysosome. It carries out the reaction Hydrolysis of unsulfated alpha-L-iduronosidic linkages in dermatan sulfate.. In Canis lupus familiaris (Dog), this protein is Alpha-L-iduronidase (IDUA).